Reading from the N-terminus, the 856-residue chain is Translation initiation factor IF-2 (856 aa).

2 disordered regions span residues 1–248 (MSDN…ARAR) and 254–273 (KRAREKDKRAHQAGTVQQKQ). Residues 22-38 (ETGQVKQSFSHGRSNTV) are compositionally biased toward polar residues. The span at 83-93 (APRPAPAPIPT) shows a compositional bias: pro residues. A compositionally biased stretch (basic and acidic residues) spans 100 to 150 (LERREQQERLLREAEEARMAALEETRRREERAKAEATEEERRRAEENRRAE). Low complexity predominate over residues 156–196 (AAAAAAAAATAEAETAAAAPREEAPAAAGTAEEAPRTSSST). Pro residues predominate over residues 197-209 (MPPPRRFTPVPSP). The span at 210–229 (KRPEPPRPQQRDRKGDDRRQ) shows a compositional bias: basic and acidic residues. One can recognise a tr-type G domain in the interval 356–526 (PRPPVVTIMG…ELQAELLELK (171 aa)). The segment at 365–372 (GHVDHGKT) is G1. 365–372 (GHVDHGKT) serves as a coordination point for GTP. The G2 stretch occupies residues 390 to 394 (GITQH). Positions 412–415 (DTPG) are G3. GTP-binding positions include 412-416 (DTPGH) and 466-469 (NKMD). The G4 stretch occupies residues 466–469 (NKMD). The interval 502-504 (SAL) is G5.

It belongs to the TRAFAC class translation factor GTPase superfamily. Classic translation factor GTPase family. IF-2 subfamily.

It is found in the cytoplasm. In terms of biological role, one of the essential components for the initiation of protein synthesis. Protects formylmethionyl-tRNA from spontaneous hydrolysis and promotes its binding to the 30S ribosomal subunits. Also involved in the hydrolysis of GTP during the formation of the 70S ribosomal complex. The protein is Translation initiation factor IF-2 of Rhizorhabdus wittichii (strain DSM 6014 / CCUG 31198 / JCM 15750 / NBRC 105917 / EY 4224 / RW1) (Sphingomonas wittichii).